The sequence spans 403 residues: Probable N-acetyltransferase HLS1 (403 aa).

In terms of domain architecture, N-acetyltransferase spans 2–177; that stretch reads TVVREYDPTR…VNPVYAHRVN (176 aa).

This sequence belongs to the acetyltransferase family.

Its function is as follows. Ethylene-responsive N-acetyltransferase required for differential cell elongation in the hypocotyl. Regulates apical hook formation of dark-grown seedlings. May control differential cell growth by regulating auxin activity. May be involved in negative feedback regulation of auxin homeostasis through the control of GH3-like genes. Modulates de novo shoot organogenesis. This is Probable N-acetyltransferase HLS1 (HLS1) from Arabidopsis thaliana (Mouse-ear cress).